Consider the following 384-residue polypeptide: Oxoeicosanoid receptor 1 (384 aa).

The segment at 1–21 (MELHNLSSPSPSLSSSVLPPS) is disordered. The Extracellular portion of the chain corresponds to 1-58 (MELHNLSSPSPSLSSSVLPPSFSPSPSSAPSAFTTVGGSSGGPCHPTSSSLVSAFLAP). N5 is a glycosylation site (N-linked (GlcNAc...) asparagine). The segment covering 7–21 (SSPSPSLSSSVLPPS) has biased composition (low complexity). Residues 59 to 79 (ILALEFVLGLVGNSLALFIFC) form a helical membrane-spanning segment. Residues 80 to 87 (IHTRPWTS) are Cytoplasmic-facing. A helical transmembrane segment spans residues 88–108 (NTVFLVSLVAADFLLISNLPL). Over 109–129 (RVDYYLLHETWRFGAAACKVN) the chain is Extracellular. Cysteines 126 and 198 form a disulfide. The helical transmembrane segment at 130–152 (LFMLSTNRTASVVFLTAIALNRY) threads the bilayer. Residues 153-172 (LKVVQPHHVLSRASVGAAAR) lie on the Cytoplasmic side of the membrane. The helical transmembrane segment at 173-193 (VAGGLWVGILLLNGHLLLSTF) threads the bilayer. Residues 194–215 (SGPSCLSYRVGTKPSASLRWHQ) are Extracellular-facing. The helical transmembrane segment at 216–236 (ALYLLEFFLPLALILFAIVSI) threads the bilayer. Over 237–256 (GLTIRNRGLGGQAGPQRAMR) the chain is Cytoplasmic. The helical transmembrane segment at 257 to 277 (VLAMVVAVYTICFLPSIIFGM) threads the bilayer. The Extracellular portion of the chain corresponds to 278–297 (ASMVAFWLSACRSLDLCTQL). Residues 298 to 318 (FHGSLAFTYLNSVLDPVLYCF) form a helical membrane-spanning segment. At 319–384 (SSPNFLHQSR…SLEKEGSSQG (66 aa)) the chain is on the cytoplasmic side.

Belongs to the G-protein coupled receptor 1 family. As to expression, expressed in various tissues except brain. Expression is more intense in liver, kidney, peripheral leukocyte, lung, and spleen than in other tissues. Highly expressed in eosinophils, neutrophils, and lung macrophages.

The protein resides in the membrane. Functionally, receptor for eicosanoids and polyunsaturated fatty acids such as 5-oxo-6E,8Z,11Z,14Z-eicosatetraenoic acid (5-OXO-ETE), 5(S)-hydroperoxy-6E,8Z,11Z,14Z-eicosatetraenoic acid (5(S)-HPETE) and arachidonic acid. Seems to be coupled to the G(i)/G(o), families of heteromeric G proteins. In Homo sapiens (Human), this protein is Oxoeicosanoid receptor 1 (OXER1).